Here is a 28-residue protein sequence, read N- to C-terminus: Chaperonin GroEL (28 aa).

Belongs to the chaperonin (HSP60) family. In terms of assembly, forms a cylinder of 14 subunits composed of two heptameric rings stacked back-to-back. Interacts with the co-chaperonin GroES.

It localises to the cytoplasm. It catalyses the reaction ATP + H2O + a folded polypeptide = ADP + phosphate + an unfolded polypeptide.. Its function is as follows. Together with its co-chaperonin GroES, plays an essential role in assisting protein folding. The GroEL-GroES system forms a nano-cage that allows encapsulation of the non-native substrate proteins and provides a physical environment optimized to promote and accelerate protein folding. In Mycolicibacterium smegmatis (Mycobacterium smegmatis), this protein is Chaperonin GroEL.